The following is a 184-amino-acid chain: Phosphonoformate cytidylyltransferase (184 aa).

It catalyses the reaction phosphonoformate + CTP = CMP-5'-phosphonoformate + diphosphate. It functions in the pathway secondary metabolite biosynthesis; bialaphos biosynthesis. Functionally, catalyzes the displacement of the beta- and gamma-phosphates of CTP by phosphonoformate to produce CMP-5'-phosphonoformate, an intermediate in the biosynthesis of phosphinothricin tripeptide (PTT), also known as bialaphos (BA), a natural-product antibiotic and potent herbicide. This chain is Phosphonoformate cytidylyltransferase, found in Streptomyces viridochromogenes (strain DSM 40736 / JCM 4977 / BCRC 1201 / Tue 494).